Consider the following 229-residue polypeptide: Meiotically up-regulated gene 31 protein (229 aa).

2 disordered regions span residues 16–68 and 189–229; these read EDSA…EEDK and GLPE…TTWA.

The protein resides in the endoplasmic reticulum. Functionally, has a role in meiosis. This Schizosaccharomyces pombe (strain 972 / ATCC 24843) (Fission yeast) protein is Meiotically up-regulated gene 31 protein (mug31).